Consider the following 330-residue polypeptide: Ferric enterobactin transport system permease protein FepG (330 aa).

Residues 1–7 (MIYVSRR) are Periplasmic-facing. Residues 8–28 (LLITCLLLVSACVVAGIWGLR) form a helical membrane-spanning segment. At 29–62 (SGAVTLETSQVFAALMGDAPRSMTMVVTEWRLPR) the chain is on the cytoplasmic side. The helical transmembrane segment at 63–83 (VLMALLIGAALGVSGAIFQSL) threads the bilayer. Residues 84–92 (MRNPLGSPD) lie on the Periplasmic side of the membrane. A helical membrane pass occupies residues 93–113 (VMGFNTGAWSGVLVAMVLFGQ). Residues 114–117 (DLTA) are Cytoplasmic-facing. The helical transmembrane segment at 118-138 (IALSAMVGGIVTSLLVWLLAW) threads the bilayer. Over 139-146 (RNGIDTFR) the chain is Periplasmic. The helical transmembrane segment at 147-167 (LIIIGIGVRAMLVAFNTWLLL) threads the bilayer. At 168–190 (KASLETALTAGLWNAGSLNGLTW) the chain is on the cytoplasmic side. The helical transmembrane segment at 191–211 (AKTSPSAPIIILMLIAAALLV) threads the bilayer. Residues 212–235 (RRMRLLEMGDDTACALGVSVERSR) lie on the Periplasmic side of the membrane. The helical transmembrane segment at 236-256 (LLMMLVAVVLTAAATALAGPI) threads the bilayer. Topologically, residues 257 to 275 (SFIALVAPHIARRISGTAR) are cytoplasmic. Residues 276–296 (WGLTQAALCGALLLLAADLCA) form a helical membrane-spanning segment. The Periplasmic portion of the chain corresponds to 297–303 (QQLFMPY). The helical transmembrane segment at 304 to 324 (QLPVGVVTVSLGGIYLIVLLI) threads the bilayer. Over 325-330 (QESRKK) the chain is Cytoplasmic.

The protein belongs to the binding-protein-dependent transport system permease family. FecCD subfamily. As to quaternary structure, the complex is composed of two ATP-binding proteins (FepC), two transmembrane proteins (FepD and FepG) and a solute-binding protein (FepB).

Its subcellular location is the cell inner membrane. In terms of biological role, part of the ABC transporter complex FepBDGC involved in ferric enterobactin uptake. Responsible for the translocation of the substrate across the membrane. The chain is Ferric enterobactin transport system permease protein FepG (fepG) from Escherichia coli (strain K12).